Consider the following 86-residue polypeptide: Elicitor peptide 5 (86 aa).

A propeptide spanning residues 1–59 (MQQERDHKRDCCKLMPQTVKAFFKCLRFRRSSSSSSDMVKARARNEEKEEPSSIETSTR) is cleaved from the precursor. Residues 31 to 86 (SSSSSSDMVKARARNEEKEEPSSIETSTRSLNVMRKGIRKQPVSSGKRGGVNDYDM) form a disordered region. Residues 39 to 51 (VKARARNEEKEEP) show a composition bias toward basic and acidic residues.

Belongs to the brassicaceae elicitor peptide family.

Its function is as follows. Elicitor of plant defense. The chain is Elicitor peptide 5 (PEP5) from Arabidopsis thaliana (Mouse-ear cress).